Consider the following 145-residue polypeptide: uncharacterized protein (145 aa).

This is an uncharacterized protein from Deinococcus radiodurans (strain ATCC 13939 / DSM 20539 / JCM 16871 / CCUG 27074 / LMG 4051 / NBRC 15346 / NCIMB 9279 / VKM B-1422 / R1).